The following is a 227-amino-acid chain: Transmembrane emp24 domain-containing protein 1 (227 aa).

The first 24 residues, 1–24, serve as a signal peptide directing secretion; that stretch reads MMAAGAAVALALWLLLPAVGVGEA. Residues 25 to 194 lie on the Extracellular side of the membrane; the sequence is GPPPIQDGEF…LQEDNLERVN (170 aa). Residues 43–125 enclose the GOLD domain; the sequence is KQCFYQSAPA…EKLVFFELIF (83 aa). The stretch at 145-170 forms a coiled coil; the sequence is EMLDVKMEDIKESIETMRTRLERSIQ. The helical transmembrane segment at 195-215 threads the bilayer; that stretch reads FWSAANVAVLLLVAVLQVCTL. Residues 216–227 lie on the Cytoplasmic side of the membrane; the sequence is KRFFHDKRPVPT. Residues 218–219 carry the COPII vesicle coat-binding motif; sequence FF. The short motif at 218-227 is the COPI vesicle coat-binding element; it reads FFHDKRPVPT.

This sequence belongs to the EMP24/GP25L family. As to quaternary structure, homodimer in endoplasmic reticulum, endoplasmic reticulum-Golgi intermediate compartment and cis-Golgi network. Interacts with IL1RL1. Interacts with RNF26; this interaction is important to modulate innate immune signaling through the cGAS-STING pathway. Widely expressed.

The protein resides in the cell membrane. It localises to the endoplasmic reticulum membrane. The protein localises to the golgi apparatus. Its subcellular location is the cis-Golgi network membrane. It is found in the endoplasmic reticulum-Golgi intermediate compartment membrane. In terms of biological role, potential role in vesicular protein trafficking, mainly in the early secretory pathway. May act as a cargo receptor at the lumenal side for incorporation of secretory cargo molecules into transport vesicles and may be involved in vesicle coat formation at the cytoplasmic side. Plays a positive role in IL-33-mediated IL-8 and IL-6 production by interacting with interleukin-33 receptor IL1RL1. Plays also a role in the modulation of innate immune signaling through the cGAS-STING pathway by interacting with RNF26. The polypeptide is Transmembrane emp24 domain-containing protein 1 (Tmed1) (Mus musculus (Mouse)).